The following is a 399-amino-acid chain: Phosphoglycerate kinase (399 aa).

Residues 21–23, Arg36, 59–62, Arg120, and Arg158 contribute to the substrate site; these read DFN and HLGR. ATP-binding positions include Lys209, Gly297, Glu328, and 355–358; that span reads GGDS.

Belongs to the phosphoglycerate kinase family. Monomer.

It localises to the cytoplasm. It catalyses the reaction (2R)-3-phosphoglycerate + ATP = (2R)-3-phospho-glyceroyl phosphate + ADP. The protein operates within carbohydrate degradation; glycolysis; pyruvate from D-glyceraldehyde 3-phosphate: step 2/5. The polypeptide is Phosphoglycerate kinase (Streptococcus suis (strain 05ZYH33)).